Reading from the N-terminus, the 417-residue chain is RH-like protein (417 aa).

Transmembrane regions (helical) follow at residues 12 to 32, 44 to 64, 77 to 97, 125 to 145, 172 to 192, 203 to 223, 238 to 258, 265 to 285, 287 to 307, 331 to 351, and 358 to 378; these read CLPL…FFFT, LVAS…GLGF, VAFN…LDGF, ISMN…MELV, IHVF…KPLP, TSPS…WPTF, VFST…VSSL, INMT…GASC, VIHS…ISFG, TFGL…ALRV, and MIGF…AMSI.

It belongs to the ammonium transporter (TC 2.A.49) family. Rh subfamily.

It localises to the membrane. Its function is as follows. May be part of an oligomeric complex which is likely to have a transport or channel function in the erythrocyte membrane. The sequence is that of RH-like protein from Macaca fascicularis (Crab-eating macaque).